Here is a 378-residue protein sequence, read N- to C-terminus: UDP-N-acetylglucosamine--N-acetylmuramyl-(pentapeptide) pyrophosphoryl-undecaprenol N-acetylglucosamine transferase (378 aa).

UDP-N-acetyl-alpha-D-glucosamine contacts are provided by residues 14 to 16, asparagine 125, arginine 165, serine 193, and glutamine 293; that span reads TGG.

This sequence belongs to the glycosyltransferase 28 family. MurG subfamily.

It localises to the cell inner membrane. The enzyme catalyses di-trans,octa-cis-undecaprenyl diphospho-N-acetyl-alpha-D-muramoyl-L-alanyl-D-glutamyl-meso-2,6-diaminopimeloyl-D-alanyl-D-alanine + UDP-N-acetyl-alpha-D-glucosamine = di-trans,octa-cis-undecaprenyl diphospho-[N-acetyl-alpha-D-glucosaminyl-(1-&gt;4)]-N-acetyl-alpha-D-muramoyl-L-alanyl-D-glutamyl-meso-2,6-diaminopimeloyl-D-alanyl-D-alanine + UDP + H(+). It functions in the pathway cell wall biogenesis; peptidoglycan biosynthesis. Cell wall formation. Catalyzes the transfer of a GlcNAc subunit on undecaprenyl-pyrophosphoryl-MurNAc-pentapeptide (lipid intermediate I) to form undecaprenyl-pyrophosphoryl-MurNAc-(pentapeptide)GlcNAc (lipid intermediate II). The chain is UDP-N-acetylglucosamine--N-acetylmuramyl-(pentapeptide) pyrophosphoryl-undecaprenol N-acetylglucosamine transferase from Bartonella bacilliformis (strain ATCC 35685 / KC583 / Herrer 020/F12,63).